The primary structure comprises 189 residues: Phosphoheptose isomerase (189 aa).

One can recognise an SIS domain in the interval 34 to 189 (LVAALKGGKK…CDLVEKGLFK (156 aa)). Position 49 to 51 (49 to 51 (NGG)) interacts with substrate. Residues H58 and E62 each contribute to the Zn(2+) site. Substrate contacts are provided by residues E62, 91–92 (ND), 117–119 (STS), S122, and Q169. Residues Q169 and H177 each contribute to the Zn(2+) site.

The protein belongs to the SIS family. GmhA subfamily. In terms of assembly, homotetramer. Zn(2+) serves as cofactor.

The protein resides in the cytoplasm. It carries out the reaction 2 D-sedoheptulose 7-phosphate = D-glycero-alpha-D-manno-heptose 7-phosphate + D-glycero-beta-D-manno-heptose 7-phosphate. It functions in the pathway carbohydrate biosynthesis; D-glycero-D-manno-heptose 7-phosphate biosynthesis; D-glycero-alpha-D-manno-heptose 7-phosphate and D-glycero-beta-D-manno-heptose 7-phosphate from sedoheptulose 7-phosphate: step 1/1. Functionally, catalyzes the isomerization of sedoheptulose 7-phosphate in D-glycero-D-manno-heptose 7-phosphate. The protein is Phosphoheptose isomerase of Geobacter metallireducens (strain ATCC 53774 / DSM 7210 / GS-15).